The primary structure comprises 240 residues: UDP-2,3-diacylglucosamine hydrolase (240 aa).

Asp-8, His-10, Asp-41, Asn-79, and His-114 together coordinate Mn(2+). 79–80 (NR) serves as a coordination point for substrate. 5 residues coordinate substrate: Asp-122, Ser-160, Asn-164, Lys-167, and His-195. Residues His-195 and His-197 each contribute to the Mn(2+) site.

This sequence belongs to the LpxH family. It depends on Mn(2+) as a cofactor.

It localises to the cell inner membrane. The enzyme catalyses UDP-2-N,3-O-bis[(3R)-3-hydroxytetradecanoyl]-alpha-D-glucosamine + H2O = 2-N,3-O-bis[(3R)-3-hydroxytetradecanoyl]-alpha-D-glucosaminyl 1-phosphate + UMP + 2 H(+). Its pathway is glycolipid biosynthesis; lipid IV(A) biosynthesis; lipid IV(A) from (3R)-3-hydroxytetradecanoyl-[acyl-carrier-protein] and UDP-N-acetyl-alpha-D-glucosamine: step 4/6. Hydrolyzes the pyrophosphate bond of UDP-2,3-diacylglucosamine to yield 2,3-diacylglucosamine 1-phosphate (lipid X) and UMP by catalyzing the attack of water at the alpha-P atom. Involved in the biosynthesis of lipid A, a phosphorylated glycolipid that anchors the lipopolysaccharide to the outer membrane of the cell. This is UDP-2,3-diacylglucosamine hydrolase from Klebsiella pneumoniae subsp. pneumoniae (strain ATCC 700721 / MGH 78578).